We begin with the raw amino-acid sequence, 563 residues long: Inositol-3-phosphate synthase 1-B (563 aa).

It belongs to the myo-inositol 1-phosphate synthase family. NAD(+) serves as cofactor.

The protein resides in the cytoplasm. It catalyses the reaction D-glucose 6-phosphate = 1D-myo-inositol 3-phosphate. The protein operates within polyol metabolism; myo-inositol biosynthesis; myo-inositol from D-glucose 6-phosphate: step 1/2. Its function is as follows. Key enzyme in myo-inositol biosynthesis pathway that catalyzes the conversion of glucose 6-phosphate to 1-myo-inositol 1-phosphate in a NAD-dependent manner. Rate-limiting enzyme in the synthesis of all inositol-containing compounds. The sequence is that of Inositol-3-phosphate synthase 1-B (isyna1-b) from Xenopus laevis (African clawed frog).